The following is a 312-amino-acid chain: Olfactory receptor 1F1 (312 aa).

Residues 1-25 are Extracellular-facing; that stretch reads MSGTNQSSVSEFLLLGLSRQPQQQH. Asn5 carries an N-linked (GlcNAc...) asparagine glycan. Residues 26–49 form a helical membrane-spanning segment; sequence LLFVFFLSMYLATVLGNLLIILSV. Topologically, residues 50–57 are cytoplasmic; sequence SIDSCLHT. The helical transmembrane segment at 58–79 threads the bilayer; sequence PMYFFLSNLSFVDICFSFTTVP. Topologically, residues 80–100 are extracellular; sequence KMLANHILETQTISFCGCLTQ. A disulfide bridge links Cys97 with Cys189. A helical membrane pass occupies residues 101-120; it reads MYFVFMFVDMDNFLLAVMAY. Over 121-139 the chain is Cytoplasmic; sequence DHFVAVCHPLHYTAKMTHQ. Residues 140–158 traverse the membrane as a helical segment; the sequence is LCALLVAGLWVVANLNVLL. Over 159–196 the chain is Extracellular; it reads HTLLMAPLSFCADNAITHFFCDVTPLLKLSCSDTHLNE. A helical membrane pass occupies residues 197–219; the sequence is VIILSEGALVMITPFLCILASYM. Over 220 to 236 the chain is Cytoplasmic; that stretch reads HITCTVLKVPSTKGRWK. A helical membrane pass occupies residues 237-259; the sequence is AFSTCGSHLAVVLLFYSTIIAVY. Topologically, residues 260 to 272 are extracellular; the sequence is FNPLSSHSAEKDT. A helical membrane pass occupies residues 273–292; the sequence is MATVLYTVVTPMLNPFIYSL. Over 293–312 the chain is Cytoplasmic; the sequence is RNRYLKGALKKVVGRVVFSV.

The protein belongs to the G-protein coupled receptor 1 family.

It is found in the cell membrane. Functionally, odorant receptor. This is Olfactory receptor 1F1 (OR1F1) from Homo sapiens (Human).